The following is a 393-amino-acid chain: MEAPLVSLDEEFEDIRPCCTEDPEEKPQSLYGTSPHHLEDPSLSELENFSSEIISFKSMEDLVNEFDEKLNVCFRNYNAKTENLAPVKNQLQIQEEEETLRDEEVWDALTDNYIPSLSEDWRDPNIEALNGNSSDTEIHEKEEEDEFIEKSENDSGINEEPLLTADQVIEEIEEMMQNSPDPEEEVEVLEEEDGGEISSQADSVLLQEMQALTQTFNNNWSYEGLRHMSGSELTELLDQVEGAIRDFSEELVHQLARRDELEFEKEVKNSFITVLIEVQNKQKEQRELMKKRRKEKGLSLQSSRIEKGNQMPLKRFSMEGISNILQSGIRQTFGSSGADRQYLNTVIPYEKKSSPPSVEDLQMLTNILFAMKEDNEKVPTLLTDYILKVLCPT.

A disordered region spans residues 1–41 (MEAPLVSLDEEFEDIRPCCTEDPEEKPQSLYGTSPHHLEDP). Ser-58 is subject to Phosphoserine. The interval 130 to 154 (NGNSSDTEIHEKEEEDEFIEKSEND) is disordered. Positions 231-299 (SELTELLDQV…KKRRKEKGLS (69 aa)) form a coiled coil. Residues Ser-299 and Ser-317 each carry the phosphoserine modification.

It belongs to the zygin family. In terms of assembly, homodimer. Interacts with UBE4B and SAP30L. Interacts with SCOC and ULK1; SCOC interferes with ULK1-binding to FEZ1. Directly interacts with SCOC and UVRAG. Stabilizes the interaction between SCOC and UVRAG during amino acid starvation. Interacts with the NH2-terminal variable region (V1) of PKC zeta and weakly with that of PKC epsilon. Phosphorylated by protein kinase C zeta; which enhances interaction with UBE4B and polyubiquitination. Post-translationally, polyubiquitinated in a UBE4B-dependent manner; which does not lead to proteasomal degradation and may be important for neurogenic activity. Polyubiquitin linkage seems to be mainly through Lys-26. As to expression, brain.

Its subcellular location is the cytoplasm. It is found in the cytoskeleton. The protein localises to the microtubule organizing center. The protein resides in the centrosome. It localises to the cell membrane. May be involved in axonal outgrowth as component of the network of molecules that regulate cellular morphology and axon guidance machinery. May participate in the transport of mitochondria and other cargos along microtubules. The polypeptide is Fasciculation and elongation protein zeta-1 (Fez1) (Rattus norvegicus (Rat)).